We begin with the raw amino-acid sequence, 186 residues long: dCTP deaminase (186 aa).

107 to 112 lines the dCTP pocket; that stretch reads KSTYAR. Glu133 serves as the catalytic Proton donor/acceptor. Positions 152, 166, and 176 each coordinate dCTP.

It belongs to the dCTP deaminase family. Homotrimer.

It carries out the reaction dCTP + H2O + H(+) = dUTP + NH4(+). It participates in pyrimidine metabolism; dUMP biosynthesis; dUMP from dCTP (dUTP route): step 1/2. Catalyzes the deamination of dCTP to dUTP. This is dCTP deaminase from Campylobacter curvus (strain 525.92).